The chain runs to 367 residues: Anthranilate phosphoribosyltransferase (367 aa).

A compositionally biased stretch (low complexity) spans 1–17 (MVLSSEASSAADHSAAA). Residues 1–22 (MVLSSEASSAADHSAAAPIPTS) form a disordered region. 5-phospho-alpha-D-ribose 1-diphosphate is bound by residues G104, 107–108 (GD), T112, 114–117 (NLST), 132–140 (KHGNRAASS), and G144. G104 is a binding site for anthranilate. Residue S116 coordinates Mg(2+). N135 contributes to the anthranilate binding site. R190 is an anthranilate binding site. Residues D248 and E249 each contribute to the Mg(2+) site.

It belongs to the anthranilate phosphoribosyltransferase family. As to quaternary structure, homodimer. The cofactor is Mg(2+).

It carries out the reaction N-(5-phospho-beta-D-ribosyl)anthranilate + diphosphate = 5-phospho-alpha-D-ribose 1-diphosphate + anthranilate. It functions in the pathway amino-acid biosynthesis; L-tryptophan biosynthesis; L-tryptophan from chorismate: step 2/5. Catalyzes the transfer of the phosphoribosyl group of 5-phosphorylribose-1-pyrophosphate (PRPP) to anthranilate to yield N-(5'-phosphoribosyl)-anthranilate (PRA). This chain is Anthranilate phosphoribosyltransferase, found in Mycobacterium marinum (strain ATCC BAA-535 / M).